A 461-amino-acid polypeptide reads, in one-letter code: Mitochondrial distribution and morphology protein 12 (461 aa).

Positions 1-454 constitute an SMP-LTD domain; it reads MSLDLDWNLL…YPNYYTIDLP (454 aa). Disordered regions lie at residues 75-104 and 226-301; these read RRRG…VHHG and DASS…PSSA. Polar residues-rich tracts occupy residues 80-97 and 272-288; these read RQTT…SPTD and RATS…QNSP.

Belongs to the MDM12 family. In terms of assembly, component of the ER-mitochondria encounter structure (ERMES) or MDM complex, composed of MMM1, MDM10, MDM12 and MDM34. An MMM1 homodimer associates with one molecule of MDM12 on each side in a pairwise head-to-tail manner, and the SMP-LTD domains of MMM1 and MDM12 generate a continuous hydrophobic tunnel for phospholipid trafficking.

It is found in the mitochondrion outer membrane. It localises to the endoplasmic reticulum membrane. Its function is as follows. Component of the ERMES/MDM complex, which serves as a molecular tether to connect the endoplasmic reticulum (ER) and mitochondria. Components of this complex are involved in the control of mitochondrial shape and protein biogenesis, and function in nonvesicular lipid trafficking between the ER and mitochondria. MDM12 is required for the interaction of the ER-resident membrane protein MMM1 and the outer mitochondrial membrane-resident beta-barrel protein MDM10. The MDM12-MMM1 subcomplex functions in the major beta-barrel assembly pathway that is responsible for biogenesis of all mitochondrial outer membrane beta-barrel proteins, and acts in a late step after the SAM complex. The MDM10-MDM12-MMM1 subcomplex further acts in the TOM40-specific pathway after the action of the MDM12-MMM1 complex. Essential for establishing and maintaining the structure of mitochondria and maintenance of mtDNA nucleoids. The polypeptide is Mitochondrial distribution and morphology protein 12 (Mycosarcoma maydis (Corn smut fungus)).